Reading from the N-terminus, the 399-residue chain is Argininosuccinate synthase (399 aa).

Residues 10 to 18 and Ala38 contribute to the ATP site; that span reads AYSGGVDTS. Tyr89 serves as a coordination point for L-citrulline. Residue Gly119 participates in ATP binding. L-aspartate contacts are provided by Thr121, Asn125, and Asp126. Asn125 contributes to the L-citrulline binding site. Arg129, Ser177, Ser186, Glu262, and Tyr274 together coordinate L-citrulline.

This sequence belongs to the argininosuccinate synthase family. Type 1 subfamily. Homotetramer.

Its subcellular location is the cytoplasm. It catalyses the reaction L-citrulline + L-aspartate + ATP = 2-(N(omega)-L-arginino)succinate + AMP + diphosphate + H(+). It functions in the pathway amino-acid biosynthesis; L-arginine biosynthesis; L-arginine from L-ornithine and carbamoyl phosphate: step 2/3. The chain is Argininosuccinate synthase from Acaryochloris marina (strain MBIC 11017).